The primary structure comprises 197 residues: Thymidylate kinase (197 aa).

7–14 (GIDGSGKS) is an ATP binding site.

It belongs to the thymidylate kinase family.

It carries out the reaction dTMP + ATP = dTDP + ADP. Phosphorylation of dTMP to form dTDP in both de novo and salvage pathways of dTTP synthesis. This chain is Thymidylate kinase, found in Thermotoga petrophila (strain ATCC BAA-488 / DSM 13995 / JCM 10881 / RKU-1).